A 216-amino-acid chain; its full sequence is Thiamine-phosphate synthase (216 aa).

4-amino-2-methyl-5-(diphosphooxymethyl)pyrimidine-binding positions include 39–43 (QLRRK) and N71. Mg(2+) is bound by residues D72 and D91. Residue S109 participates in 4-amino-2-methyl-5-(diphosphooxymethyl)pyrimidine binding. 136–138 (SPT) provides a ligand contact to 2-[(2R,5Z)-2-carboxy-4-methylthiazol-5(2H)-ylidene]ethyl phosphate. 4-amino-2-methyl-5-(diphosphooxymethyl)pyrimidine is bound at residue K139. 2-[(2R,5Z)-2-carboxy-4-methylthiazol-5(2H)-ylidene]ethyl phosphate-binding positions include G172 and 192 to 193 (IT).

The protein belongs to the thiamine-phosphate synthase family. Requires Mg(2+) as cofactor.

The enzyme catalyses 2-[(2R,5Z)-2-carboxy-4-methylthiazol-5(2H)-ylidene]ethyl phosphate + 4-amino-2-methyl-5-(diphosphooxymethyl)pyrimidine + 2 H(+) = thiamine phosphate + CO2 + diphosphate. It carries out the reaction 2-(2-carboxy-4-methylthiazol-5-yl)ethyl phosphate + 4-amino-2-methyl-5-(diphosphooxymethyl)pyrimidine + 2 H(+) = thiamine phosphate + CO2 + diphosphate. The catalysed reaction is 4-methyl-5-(2-phosphooxyethyl)-thiazole + 4-amino-2-methyl-5-(diphosphooxymethyl)pyrimidine + H(+) = thiamine phosphate + diphosphate. Its pathway is cofactor biosynthesis; thiamine diphosphate biosynthesis; thiamine phosphate from 4-amino-2-methyl-5-diphosphomethylpyrimidine and 4-methyl-5-(2-phosphoethyl)-thiazole: step 1/1. Its function is as follows. Condenses 4-methyl-5-(beta-hydroxyethyl)thiazole monophosphate (THZ-P) and 2-methyl-4-amino-5-hydroxymethyl pyrimidine pyrophosphate (HMP-PP) to form thiamine monophosphate (TMP). This chain is Thiamine-phosphate synthase, found in Bordetella avium (strain 197N).